The following is a 307-amino-acid chain: Opsin-like protein carO (307 aa).

N-linked (GlcNAc...) asparagine glycosylation occurs at Asn28. The next 7 membrane-spanning stretches (helical) occupy residues 36-56 (WYWA…GLGM), 64-84 (IFHY…FTMA), 118-138 (WFLT…MPWP), 140-160 (VLWV…GALV), 166-186 (WGYF…LAWE), 202-222 (FVMC…AWGV), and 235-255 (AVFY…LLLW). Residues 280–307 (GPNNKVASGHGARNDTATASGSNVNPNA) are disordered. N-linked (GlcNAc...) asparagine glycosylation occurs at Asn293. Residues 294–307 (DTATASGSNVNPNA) show a composition bias toward polar residues.

The protein belongs to the archaeal/bacterial/fungal opsin family.

Its subcellular location is the membrane. Its function is as follows. Opsin-like protein; part of the car gene cluster that mediates the biosynthesis of neurosporaxanthin, a carboxylic apocarotenoid acting as an essential protective pigment and leading to orange pigmentation. The exact role of carO in carotenoid biosynthesis is not known yet, but it could be involved in the regulation of the pathway by light or other stimuli. The protein is Opsin-like protein carO of Fusarium fujikuroi (Bakanae and foot rot disease fungus).